Here is a 402-residue protein sequence, read N- to C-terminus: Speedy protein E5 (402 aa).

The segment at 1 to 89 (MDRTETRFRK…EEPEKELAPE (89 aa)) is disordered. Polar residues predominate over residues 16–39 (EKITTSRQPQPQNEQSPQRSTSGY). A compositionally biased stretch (acidic residues) spans 76–89 (DESAEEPEKELAPE).

Belongs to the Speedy/Ringo family.

The polypeptide is Speedy protein E5 (SPDYE5) (Homo sapiens (Human)).